We begin with the raw amino-acid sequence, 82 residues long: Sec-independent protein translocase protein TatA (82 aa).

Residues 1–21 traverse the membrane as a helical segment; the sequence is MGSFSIWHWLIVLLIVVMVFG. The interval 46–82 is disordered; sequence GASTDDSATTSAPAGQVTNNSTAADKTTIDVEAKHKS. Residues 49 to 70 show a composition bias toward polar residues; it reads TDDSATTSAPAGQVTNNSTAAD. A compositionally biased stretch (basic and acidic residues) spans 72–82; that stretch reads TTIDVEAKHKS.

It belongs to the TatA/E family. In terms of assembly, the Tat system comprises two distinct complexes: a TatABC complex, containing multiple copies of TatA, TatB and TatC subunits, and a separate TatA complex, containing only TatA subunits. Substrates initially bind to the TatABC complex, which probably triggers association of the separate TatA complex to form the active translocon.

Its subcellular location is the cell inner membrane. In terms of biological role, part of the twin-arginine translocation (Tat) system that transports large folded proteins containing a characteristic twin-arginine motif in their signal peptide across membranes. TatA could form the protein-conducting channel of the Tat system. The chain is Sec-independent protein translocase protein TatA from Acidovorax sp. (strain JS42).